The primary structure comprises 158 residues: Large ribosomal subunit protein uL15 (158 aa).

The segment covering 1–13 has biased composition (basic and acidic residues); the sequence is MKLNEIKDNEGST. Positions 1 to 45 are disordered; sequence MKLNEIKDNEGSTHSRKRLGRGIGSGSGKTGGRGVKGQKSRSGVA. The segment covering 21–35 has biased composition (gly residues); the sequence is RGIGSGSGKTGGRGV.

The protein belongs to the universal ribosomal protein uL15 family. Part of the 50S ribosomal subunit.

In terms of biological role, binds to the 23S rRNA. The sequence is that of Large ribosomal subunit protein uL15 from Rhizobium etli (strain CIAT 652).